The following is a 603-amino-acid chain: Zyxin (603 aa).

Positions 1 to 13 (MGPPPPPPPPPLL) are enriched in pro residues. 5 disordered regions span residues 1–131 (MGPP…HRDP), 166–193 (TQYANKSPSPPSFGNSNSEATYVSPYSS), 218–237 (ATTTTSSNSLNENNNSNKYG), 310–333 (RDEGLTESQKAANRNQTGALSASS), and 363–395 (LNQPADTSPSIVQYPRRQAPDSSRANYSATTST). Over residues 69–95 (VRGDVENLSDGRLDRPHQQLPDGDRTY) the composition is skewed to basic and acidic residues. The span at 184–193 (EATYVSPYSS) shows a compositional bias: polar residues. Residues 218 to 234 (ATTTTSSNSLNENNNSN) are compositionally biased toward low complexity. 3 stretches are compositionally biased toward polar residues: residues 315–333 (TESQKAANRNQTGALSASS), 363–373 (LNQPADTSPSI), and 382–391 (PDSSRANYSA). LIM zinc-binding domains follow at residues 409–470 (NICV…SLEK), 471–529 (CTAC…KFAP), and 530–601 (RCAL…RVVS).

This sequence belongs to the zyxin/ajuba family. Interacts with dyc-1. Interacts with glh-1 and glh-3. Expressed in neurons and body wall muscle. Expressed in pharyngeal, enteric and uterine muscles and in spermatheca.

The protein resides in the nucleus. It is found in the cytoplasm. It localises to the myofibril. The protein localises to the sarcomere. Its subcellular location is the m line. The protein resides in the cell projection. It is found in the axon. It localises to the cell junction. The protein localises to the focal adhesion. Its subcellular location is the cytoskeleton. Functions both as a mechanical stabilizer (via LIM domains) of focal adhesions, and as a sensor component for muscle cell damage (via N-terminus). Regulates, stabilizes and maintains posterior lateral mechanosensory (PLM) synaptic branch extension and new synapse formation and growth during larval development. The chain is Zyxin from Caenorhabditis elegans.